The chain runs to 441 residues: Transcriptional regulatory protein ZraR (441 aa).

The region spanning 7-121 (DILVVDDDIS…NLQATLEKAL (115 aa)) is the Response regulatory domain. Position 56 is a 4-aspartylphosphate (aspartate 56). One can recognise a Sigma-54 factor interaction domain in the interval 141-370 (MVGKSPAMQH…LENAVERAVV (230 aa)). 4 residues coordinate ATP: glycine 172, threonine 173, arginine 329, and arginine 359. The segment at residues 421-440 (KTEAARQLGITRKTLLAKLS) is a DNA-binding region (H-T-H motif).

As to quaternary structure, monomer. In terms of processing, phosphorylated by ZraS.

It is found in the cytoplasm. With respect to regulation, activity of the ZraS/ZraR two-component system is repressed by the zinc-bound form of ZraP, which probably interacts with the periplasmic region of ZraS. In terms of biological role, part of the Zra signaling pathway, an envelope stress response (ESR) system composed of the periplasmic accessory protein ZraP, the histidine kinase ZraS and the transcriptional regulator ZraR. The ZraPSR system contributes to antibiotic resistance and is important for membrane integrity in the presence of membrane-targeting biocides. ZraR is a member of the two-component regulatory system ZraS/ZraR. When activated by ZraS, acts in conjunction with sigma-54 to regulate the expression of zraP in the presence of high Zn(2+) or Pb(2+) concentrations. Also positively autoregulates the expression of the zraSR operon. Binds to a region within the zraP-zraSR intergenic region that is characterized by two inverted repeats separated by a 14 bp spacer. In addition, controls a regulon of genes of diverse functions that may be critical to maintain envelope integrity and cell survival under stressful conditions. The system has no direct role in zinc or copper resistance. The chain is Transcriptional regulatory protein ZraR from Escherichia coli (strain K12).